We begin with the raw amino-acid sequence, 490 residues long: Beta-1,3-glucan-binding protein 1 (490 aa).

The signal sequence occupies residues 1–19 (MYKQTVVIFLLCFFICVSC). Residues 20 to 119 (YEVPPAKLEA…GEWTVTGYVD (100 aa)) form the CBM39 domain. Positions 152–490 (PPTSQNTYPC…QVDYVRVYAL (339 aa)) constitute a GH16 domain. An N-linked (GlcNAc...) asparagine glycan is attached at Asn-372.

It belongs to the insect beta-1,3-glucan binding protein family. Monomer. In terms of tissue distribution, hemolymph.

It localises to the secreted. Its function is as follows. Plays a role in the recognition of invading microorganisms activating the phenoloxidase cascade. Binds specifically to beta-1,3-glucan. Binds the Aspergillus niger cell wall component alpha-1,3-glucan, a fungal pathogen-associated molecular pattern (PAMP) that activates the host immune response. The polypeptide is Beta-1,3-glucan-binding protein 1 (Galleria mellonella (Greater wax moth)).